The primary structure comprises 901 residues: Protein translocase subunit SecA 1 (901 aa).

ATP-binding positions include Gln89, 107-111, and Asp502; that span reads GEGKT. The disordered stretch occupies residues 856–875; the sequence is AEAKASGDARPGFVEDDPST. Zn(2+) is bound by residues Cys885, Cys887, Cys896, and His897.

This sequence belongs to the SecA family. In terms of assembly, monomer and homodimer. Part of the essential Sec protein translocation apparatus which comprises SecA, SecYEG and auxiliary proteins SecDF-YajC and YidC. It depends on Zn(2+) as a cofactor.

It is found in the cell inner membrane. Its subcellular location is the cytoplasm. It carries out the reaction ATP + H2O + cellular proteinSide 1 = ADP + phosphate + cellular proteinSide 2.. Functionally, part of the Sec protein translocase complex. Interacts with the SecYEG preprotein conducting channel. Has a central role in coupling the hydrolysis of ATP to the transfer of proteins into and across the cell membrane, serving both as a receptor for the preprotein-SecB complex and as an ATP-driven molecular motor driving the stepwise translocation of polypeptide chains across the membrane. This Ruegeria pomeroyi (strain ATCC 700808 / DSM 15171 / DSS-3) (Silicibacter pomeroyi) protein is Protein translocase subunit SecA 1.